The following is a 421-amino-acid chain: D-amino acid dehydrogenase (421 aa).

Residue 3-17 (VLILGSGVIGVTSAY) participates in FAD binding.

This sequence belongs to the DadA oxidoreductase family. FAD serves as cofactor.

The catalysed reaction is a D-alpha-amino acid + A + H2O = a 2-oxocarboxylate + AH2 + NH4(+). In terms of biological role, oxidative deamination of D-amino acids. The protein is D-amino acid dehydrogenase of Bradyrhizobium diazoefficiens (strain JCM 10833 / BCRC 13528 / IAM 13628 / NBRC 14792 / USDA 110).